The following is a 470-amino-acid chain: Serine/threonine-protein kinase-like protein At1g28390 (470 aa).

Positions 52–333 constitute a Protein kinase domain; sequence FSANNFLGKG…LEVVECLKTV (282 aa). Residues 58–66 and K81 contribute to the ATP site; that span reads LGKGSHGRV. The active-site Proton acceptor is the D186. A phosphothreonine mark is found at T221 and T226. Y234 carries the post-translational modification Phosphotyrosine.

This sequence belongs to the protein kinase superfamily. Ser/Thr protein kinase family.

The catalysed reaction is L-seryl-[protein] + ATP = O-phospho-L-seryl-[protein] + ADP + H(+). The enzyme catalyses L-threonyl-[protein] + ATP = O-phospho-L-threonyl-[protein] + ADP + H(+). The sequence is that of Serine/threonine-protein kinase-like protein At1g28390 from Arabidopsis thaliana (Mouse-ear cress).